The following is a 289-amino-acid chain: ATP synthase gamma chain (289 aa).

The protein belongs to the ATPase gamma chain family. As to quaternary structure, F-type ATPases have 2 components, CF(1) - the catalytic core - and CF(0) - the membrane proton channel. CF(1) has five subunits: alpha(3), beta(3), gamma(1), delta(1), epsilon(1). CF(0) has three main subunits: a, b and c.

The protein resides in the cell inner membrane. In terms of biological role, produces ATP from ADP in the presence of a proton gradient across the membrane. The gamma chain is believed to be important in regulating ATPase activity and the flow of protons through the CF(0) complex. The polypeptide is ATP synthase gamma chain (Anaeromyxobacter dehalogenans (strain 2CP-C)).